A 619-amino-acid polypeptide reads, in one-letter code: Grainyhead-like protein 2 homolog (619 aa).

Positions 1–90 (MSQETDNKRL…KINEGHEDQD (90 aa)) are transcription activation. 3 disordered regions span residues 86 to 108 (HEDQ…STGE), 125 to 147 (NDTV…PQPA), and 423 to 444 (EERK…CNNS). Positions 99 to 108 (ETPSNLSTGE) are enriched in polar residues. In terms of domain architecture, Grh/CP2 DB spans 239–477 (ASSTFQYTLE…DLDVQPVLFI (239 aa)).

The protein belongs to the grh/CP2 family. Grainyhead subfamily.

It is found in the nucleus. It localises to the membrane. Transcription factor playing an important role in primary neurulation and in epithelial development. Binds directly to the consensus DNA sequence 5'-AACCGGTT-3' acting as an activator and repressor on distinct target genes. The polypeptide is Grainyhead-like protein 2 homolog (grhl2) (Xenopus tropicalis (Western clawed frog)).